The chain runs to 223 residues: Neurotrophic factor BDNF precursor form (223 aa).

An N-terminal signal peptide occupies residues 1–5; the sequence is SCMKA. The propeptide occupies 6–114; the sequence is APMKEASIRG…AANMSMRVRR (109 aa). N-linked (GlcNAc...) asparagine glycosylation is present at N107. 2 disulfide bridges follow: C127–C194 and C172–C223.

Belongs to the NGF-beta family.

It localises to the secreted. Functionally, promotes the survival of neuronal populations that are all located either in the central nervous system or directly connected to it. The protein is Neurotrophic factor BDNF precursor form (BDNF) of Tropidophis haetianus (Haitian dwarf boa).